A 59-amino-acid polypeptide reads, in one-letter code: Large ribosomal subunit protein uL30 (59 aa).

It belongs to the universal ribosomal protein uL30 family. In terms of assembly, part of the 50S ribosomal subunit.

The polypeptide is Large ribosomal subunit protein uL30 (Desulfatibacillum aliphaticivorans).